Reading from the N-terminus, the 162-residue chain is MADSSFDIVSKVERQEVDNALNQAAKEISQRYDFKGTGASISWSGEKILMEANGEERVKAVLDIFQSKLIKRGISLKSLDAGEPQLSGKEYKIFATIEEGISQENAKKVAKIIRDEGPKGVKAQVQGDELRVSSKSRDDLQAVQALLKGQDFDFAVQFVNYR.

This sequence belongs to the YajQ family.

In terms of biological role, nucleotide-binding protein. The chain is Nucleotide-binding protein SGR_2909 from Streptomyces griseus subsp. griseus (strain JCM 4626 / CBS 651.72 / NBRC 13350 / KCC S-0626 / ISP 5235).